The primary structure comprises 671 residues: DNA ligase (671 aa).

Residues 32-36, 81-82, and Glu113 each bind NAD(+); these read DAEYD and SL. Lys115 serves as the catalytic N6-AMP-lysine intermediate. NAD(+) is bound by residues Arg136, Glu173, Lys290, and Lys314. Zn(2+) is bound by residues Cys408, Cys411, Cys426, and Cys432. A BRCT domain is found at 593–671; sequence EIDSPFAGKT…EAEMIRLLDA (79 aa).

Belongs to the NAD-dependent DNA ligase family. LigA subfamily. Mg(2+) is required as a cofactor. It depends on Mn(2+) as a cofactor.

It carries out the reaction NAD(+) + (deoxyribonucleotide)n-3'-hydroxyl + 5'-phospho-(deoxyribonucleotide)m = (deoxyribonucleotide)n+m + AMP + beta-nicotinamide D-nucleotide.. DNA ligase that catalyzes the formation of phosphodiester linkages between 5'-phosphoryl and 3'-hydroxyl groups in double-stranded DNA using NAD as a coenzyme and as the energy source for the reaction. It is essential for DNA replication and repair of damaged DNA. In Salmonella schwarzengrund (strain CVM19633), this protein is DNA ligase.